The sequence spans 558 residues: uncharacterized protein (558 aa).

6 consecutive transmembrane segments (helical) span residues 63-83 (LTGI…PSIY), 90-110 (VTFG…TYWI), 143-163 (VAAV…TLYG), 168-188 (VFVT…ATNC), 226-246 (SLGS…VLLV), and 258-278 (VLIL…ILAW). Residues 279 to 330 (LTAAPVRVVRAALKRVEQGDLRGDLVVFDGTELGELQRGFNAMVNGLRERER) form the HAMP domain. Residues 362–486 (AVVFVDIVGS…KPVNQAARLC (125 aa)) enclose the Guanylate cyclase domain. The interval 529-558 (TQLASPHRRPPGSIHLTAEHAEEIRTDRLG) is disordered. Positions 545-558 (TAEHAEEIRTDRLG) are enriched in basic and acidic residues.

Belongs to the adenylyl cyclase class-3 family.

It localises to the cell membrane. This is an uncharacterized protein from Mycobacterium tuberculosis (strain CDC 1551 / Oshkosh).